Consider the following 666-residue polypeptide: Peptidase S41 family protein phomP1' (666 aa).

An N-terminal signal peptide occupies residues 1–27 (MSSFLVQTAVVRLFLLGVVFWFPFALS). 3 N-linked (GlcNAc...) asparagine glycosylation sites follow: Asn70, Asn214, and Asn234. Residues 303–504 (DVAVLQITSF…LLQAQGVRTV (202 aa)) form a peptidase S41 domain region. Residues Asn555 and Asn612 are each glycosylated (N-linked (GlcNAc...) asparagine).

The protein belongs to the peptidase S41A family.

The protein operates within mycotoxin biosynthesis. Peptidase S41 family protein; part of the gene cluster that mediates the biosynthesis of the phomopsins, a group of hexapeptide mycotoxins which infects lupins and causes lupinosis disease in livestock. Within the pathway, phomP1 and phomP1' are probably involved in the processing of the phomA and phomA' precursors. The pathway starts with the processing of the precursor phomA by several endopeptidases including kexin proteases as well as the cluster-specific S41 family peptidase phomP1 and the oligopeptidase phomG to produce 10 identical copies of the hexapeptide Tyr-Val-Ile-Pro-Ile-Asp. After being excised from the precursor peptide, the core peptides are cyclized and modified post-translationally by enzymes encoded within the gene cluster. The timing and order of proteolysis of the phomA precursor and PTMs are still unknown. Two tyrosinase-like enzymes, phomQ1 and phomQ2, catalyze the chlorination and hydroxylation of Tyr, respectively. PhomYb, is proposed to be involved in the construction of the macrocyclic structure. The other 4 ustYa family proteins may be involved in PTMs that generate the unique structure of phomopsin A. PhomYa is required for the hydroxylation of C-beta of Tyr. PhomYc, phomYd, and phomYe are responsible for the biosynthesis of 2,3-dehydroisoleucine (dIle), 2,3-dehydroaspartic acid (dAsp), and 3,4-dehydroproline (dPro), respectively. While dIle formation by phomYc is indispensable for the installation of dAsp by phomYd, the order of the other PTMs have not been elucidated yet. Most of the biosynthetic enzymes likely have broad substrate specificity, and thus, there might be a metabolic grid from a precursor to phomopsin A. The enzyme(s) responsible for the biosynthesis of 3,4-dehydrovaline (dVal) have also not been identified yet. Finally, phomM acts as an S-adenosylmethionine-dependent alpha-N-methyltransferase that catalyzes two successive N-methylation reactions, converting N-desmethyl-phomopsin A to phomopsin A and phomopsin A further to an N,N-dimethylated congener called phomopsin E. The protein is Peptidase S41 family protein phomP1' of Diaporthe leptostromiformis (Lupinosis disease fungus).